The following is a 122-amino-acid chain: Small ribosomal subunit protein uS13 (122 aa).

The interval 93–122 (RLSLPVRGQRTKTNSRTRKGKRKTVAGKKK) is disordered. A compositionally biased stretch (basic residues) spans 101–122 (QRTKTNSRTRKGKRKTVAGKKK).

It belongs to the universal ribosomal protein uS13 family. Part of the 30S ribosomal subunit. Forms a loose heterodimer with protein S19. Forms two bridges to the 50S subunit in the 70S ribosome.

In terms of biological role, located at the top of the head of the 30S subunit, it contacts several helices of the 16S rRNA. In the 70S ribosome it contacts the 23S rRNA (bridge B1a) and protein L5 of the 50S subunit (bridge B1b), connecting the 2 subunits; these bridges are implicated in subunit movement. Contacts the tRNAs in the A and P-sites. The sequence is that of Small ribosomal subunit protein uS13 from Chlamydia abortus (strain DSM 27085 / S26/3) (Chlamydophila abortus).